A 347-amino-acid chain; its full sequence is Protein RecA (347 aa).

Residue 64 to 71 (GPESSGKT) coordinates ATP.

This sequence belongs to the RecA family.

The protein localises to the cytoplasm. In terms of biological role, can catalyze the hydrolysis of ATP in the presence of single-stranded DNA, the ATP-dependent uptake of single-stranded DNA by duplex DNA, and the ATP-dependent hybridization of homologous single-stranded DNAs. It interacts with LexA causing its activation and leading to its autocatalytic cleavage. The chain is Protein RecA from Bartonella tribocorum (strain CIP 105476 / IBS 506).